We begin with the raw amino-acid sequence, 338 residues long: 3-keto-steroid reductase erg27 (338 aa).

4 residues coordinate NADP(+): Leu-16, Thr-44, Lys-50, and Asp-75. Residues Ser-180 and Tyr-203 each act as proton donor in the active site. Residues Tyr-203, Lys-207, and Thr-236 each contribute to the NADP(+) site. Lys-207 serves as the catalytic Lowers pKa of active site Tyr.

This sequence belongs to the short-chain dehydrogenases/reductases (SDR) family. ERG27 subfamily. In terms of assembly, heterotetramer of erg25, erg26, erg27 and erg28. Erg28 acts as a scaffold to tether erg27 and other 4,4-demethylation-related enzymes, forming a demethylation enzyme complex, in the endoplasmic reticulum.

It carries out the reaction 3-dehydro-4alpha-methylzymosterol + NADPH + H(+) = 4alpha-methylzymosterol + NADP(+). It participates in steroid biosynthesis; zymosterol biosynthesis; zymosterol from lanosterol: step 5/6. The protein operates within steroid metabolism; ergosterol biosynthesis. In terms of biological role, 3-keto-steroid reductase; part of the third module of ergosterol biosynthesis pathway that includes by the late steps of the pathway. Erg27 is a catalytic component of the C-4 demethylation complex that catalyze the reduction of the keto group on the C-3. The third module or late pathway involves the ergosterol synthesis itself through consecutive reactions that mainly occur in the endoplasmic reticulum (ER) membrane. Firstly, the squalene synthase erg9 catalyzes the condensation of 2 farnesyl pyrophosphate moieties to form squalene, which is the precursor of all steroids. Secondly, squalene is converted into lanosterol by the consecutive action of the squalene epoxidase erg1 and the lanosterol synthase erg7. The lanosterol 14-alpha-demethylase erg11/cyp1 catalyzes C14-demethylation of lanosterol to produce 4,4'-dimethyl cholesta-8,14,24-triene-3-beta-ol. In the next steps, a complex process involving various demethylation, reduction and desaturation reactions catalyzed by the C-14 reductase erg24 and the C-4 demethylation complex erg25-erg26-erg27 leads to the production of zymosterol. Erg28 likely functions in the C-4 demethylation complex reaction by tethering erg26 and Erg27 to the endoplasmic reticulum or to facilitate interaction between these proteins. Then, the sterol 24-C-methyltransferase erg6 catalyzes the methyl transfer from S-adenosyl-methionine to the C-24 of zymosterol to form fecosterol. The C-8 sterol isomerase erg2 catalyzes the reaction which results in unsaturation at C-7 in the B ring of sterols and thus converts fecosterol to episterol. The sterol-C5-desaturases erg31 and erg32 then catalyze the introduction of a C-5 double bond in the B ring to produce 5-dehydroepisterol. The C-22 sterol desaturase erg5 further converts 5-dehydroepisterol into ergosta-5,7,22,24(28)-tetraen-3beta-ol by forming the C-22(23) double bond in the sterol side chain. Finally, ergosta-5,7,22,24(28)-tetraen-3beta-ol is substrate of the C-24(28) sterol reductase erg4 to produce ergosterol. In the genus Schizosaccharomyces, a second route exists between lanosterol and fecosterol, via the methylation of lanosterol to eburicol by erg6, followed by C14-demethylation by erg11/cyp1 and C4-demethylation by the demethylation complex erg25-erg26-erg27. In Schizosaccharomyces pombe (strain 972 / ATCC 24843) (Fission yeast), this protein is 3-keto-steroid reductase erg27.